The primary structure comprises 185 residues: Threonylcarbamoyl-AMP synthase (185 aa).

The 183-residue stretch at 3–185 (EQAPAEVKQV…IDAISGKILR (183 aa)) folds into the YrdC-like domain.

The protein belongs to the SUA5 family. TsaC subfamily.

Its subcellular location is the cytoplasm. It catalyses the reaction L-threonine + hydrogencarbonate + ATP = L-threonylcarbamoyladenylate + diphosphate + H2O. Functionally, required for the formation of a threonylcarbamoyl group on adenosine at position 37 (t(6)A37) in tRNAs that read codons beginning with adenine. Catalyzes the conversion of L-threonine, HCO(3)(-)/CO(2) and ATP to give threonylcarbamoyl-AMP (TC-AMP) as the acyladenylate intermediate, with the release of diphosphate. This is Threonylcarbamoyl-AMP synthase from Shewanella woodyi (strain ATCC 51908 / MS32).